Consider the following 140-residue polypeptide: Small ribosomal subunit protein uS19 (140 aa).

The segment at 120 to 140 (RPKHSAPGIGATRSSAHVSKK) is disordered. A compositionally biased stretch (polar residues) spans 131 to 140 (TRSSAHVSKK).

It belongs to the universal ribosomal protein uS19 family.

Protein S19 forms a complex with S13 that binds strongly to the 16S ribosomal RNA. The chain is Small ribosomal subunit protein uS19 from Nanoarchaeum equitans (strain Kin4-M).